A 225-amino-acid polypeptide reads, in one-letter code: Thymidylate kinase (225 aa).

Position 9 to 16 (9 to 16 (GIEGCGKT)) interacts with ATP.

It belongs to the thymidylate kinase family.

It carries out the reaction dTMP + ATP = dTDP + ADP. In terms of biological role, phosphorylation of dTMP to form dTDP in both de novo and salvage pathways of dTTP synthesis. This chain is Thymidylate kinase, found in Geobacter sp. (strain M21).